Reading from the N-terminus, the 406-residue chain is Solanesyl diphosphate synthase 1, chloroplastic (406 aa).

The N-terminal 71 residues, 1-71 (MMTSCRNIDL…NGIGQSQTVS (71 aa)), are a transit peptide targeting the chloroplast. Isopentenyl diphosphate-binding residues include Lys126, Arg129, and His164. The Mg(2+) site is built by Asp171 and Asp175. Arg180 lines the an all-trans-polyprenyl diphosphate pocket. Arg181 contacts isopentenyl diphosphate. 4 residues coordinate an all-trans-polyprenyl diphosphate: Lys257, Thr258, Gln295, and Lys312.

It belongs to the FPP/GGPP synthase family. In terms of assembly, homodimer. Interacts with FBN5. Requires Mg(2+) as cofactor. In terms of tissue distribution, higher expression in leaves than in roots.

It localises to the plastid. The protein resides in the chloroplast. The catalysed reaction is 5 isopentenyl diphosphate + (2E,6E,10E)-geranylgeranyl diphosphate = all-trans-nonaprenyl diphosphate + 5 diphosphate. It catalyses the reaction isopentenyl diphosphate + (2E,6E)-farnesyl diphosphate = (2E,6E,10E)-geranylgeranyl diphosphate + diphosphate. In terms of biological role, involved in providing solanesyl diphosphate for plastoquinone-9 (PQ-9) formation in plastids. Catalyzes the elongation of the prenyl side chain of PQ-9 in plastids. Contributes to the biosynthesis of plastochromanol-8 (PC-8) in plastids. Does not contribute to the synthesis of tocopherol or ubiquinone. PQ-9 and PC-8 are lipophilic antioxidants that act as protectant against photooxidative stress under high light stress conditions. Prefers geranylgeranyl diphosphate to farnesyl diphosphate as substrate. No activity with geranyl diphosphate or dimethylallyl diphosphate as substrate. In Arabidopsis thaliana (Mouse-ear cress), this protein is Solanesyl diphosphate synthase 1, chloroplastic.